The following is a 156-amino-acid chain: Small ribosomal subunit protein uS7 (156 aa).

The protein belongs to the universal ribosomal protein uS7 family. In terms of assembly, part of the 30S ribosomal subunit. Contacts proteins S9 and S11.

One of the primary rRNA binding proteins, it binds directly to 16S rRNA where it nucleates assembly of the head domain of the 30S subunit. Is located at the subunit interface close to the decoding center, probably blocks exit of the E-site tRNA. In Magnetococcus marinus (strain ATCC BAA-1437 / JCM 17883 / MC-1), this protein is Small ribosomal subunit protein uS7.